Reading from the N-terminus, the 121-residue chain is Large ribosomal subunit protein bL17 (121 aa).

It belongs to the bacterial ribosomal protein bL17 family. As to quaternary structure, part of the 50S ribosomal subunit. Contacts protein L32.

The sequence is that of Large ribosomal subunit protein bL17 from Metamycoplasma arthritidis (strain 158L3-1) (Mycoplasma arthritidis).